Reading from the N-terminus, the 430-residue chain is MASSAKSAEMPTISKTVNPTPDPHQEYLDPRITIALFEIGSHSPSSWGSLPFLKNSSHQVTEQQTAQKFNNLLKEIKDILKNMAGFEEKITEAKELFEETNITEDVSAHKENIRGLDKINEMLSTNLPVSLAPEKEDNEKKQEMILETNITEDVSAHKENIRGLDKINEMLSTNLPVSLAPEKEDNEKKQQMIMENQNSENTAQVFARDLVNRLEEKKVLNETQQSQEKAKNRLNVQEETMKIRNNMEQLLQEAEHWSKQHTELSKLIKSYQKSQKDISETLGNNGVGFQTQPNNEVSAKHELEEQVKKLSHDTYSLQLMAALLENECQILQQRVEILKELHHQKQGTLQEKPIQINYKQDKKNQKPSEAKKVEMYKQNKQAMKGTFWKKDRSCRSLDVCLNKKACNTQFNIHVARKALRGKMRSASSLR.

The disordered stretch occupies residues 1–25 (MASSAKSAEMPTISKTVNPTPDPHQ). Residues 62–102 (EQQTAQKFNNLLKEIKDILKNMAGFEEKITEAKELFEETNI) are a coiled coil. At serine 107 the chain carries Phosphoserine. Residues 166–177 (KINEMLSTNLPV) are helix-loop-helix motif. The basic motif stretch occupies residues 178–244 (SLAPEKEDNE…NVQEETMKIR (67 aa)). Coiled-coil stretches lie at residues 214–269 (LEEK…KLIK) and 316–351 (SLQL…TLQE). Serine 258 carries the phosphoserine modification. The segment at 303-324 (LEEQVKKLSHDTYSLQLMAALL) is leucine-zipper.

Interacts with PPP1CC isoform gamma-2. Phosphorylated by MAPK1/ERK2 and MAPK3/ERK1. Specifically and strongly expressed in the testis. Expressed in several tumor cell lines.

The protein localises to the cytoplasm. Its subcellular location is the nucleus. Transcription factor that binds to the DNA sequence 5'-CANNTG-3'(E box) and the G-box motif. May play an important role in the regulation of cell proliferation and differentiation during spermatogenesis. In Homo sapiens (Human), this protein is Spermatogenic leucine zipper protein 1 (SPZ1).